Here is a 69-residue protein sequence, read N- to C-terminus: DNA gyrase inhibitor YacG (69 aa).

Residues cysteine 13, cysteine 16, cysteine 32, and cysteine 36 each contribute to the Zn(2+) site.

It belongs to the DNA gyrase inhibitor YacG family. Interacts with GyrB. It depends on Zn(2+) as a cofactor.

Its function is as follows. Inhibits all the catalytic activities of DNA gyrase by preventing its interaction with DNA. Acts by binding directly to the C-terminal domain of GyrB, which probably disrupts DNA binding by the gyrase. The sequence is that of DNA gyrase inhibitor YacG from Neisseria meningitidis serogroup C / serotype 2a (strain ATCC 700532 / DSM 15464 / FAM18).